Here is a 751-residue protein sequence, read N- to C-terminus: Semaphorin-3C (751 aa).

Residues 1–20 form the signal peptide; sequence MAFRTICVLVGVFICSICVK. Positions 28–511 constitute a Sema domain; sequence RVYLTFDELR…SNEGVSQVSL (484 aa). N81 carries N-linked (GlcNAc...) asparagine glycosylation. A disulfide bond links C101 and C112. A glycan (N-linked (GlcNAc...) asparagine) is linked at N123. A disulfide bridge links C130 with C139. N-linked (GlcNAc...) asparagine glycosylation is found at N252 and N268. 2 disulfides stabilise this stretch: C266/C378 and C290/C338. N-linked (GlcNAc...) asparagine glycosylation occurs at N465. C514 and C532 are joined by a disulfide. Residues 571-655 form the Ig-like C2-type domain; it reads AYRNAAEIVQ…TENSFKQTIA (85 aa). Residues N585 and N586 are each glycosylated (N-linked (GlcNAc...) asparagine). A disulfide bond links C643 and C709. Residues 712–731 are compositionally biased toward basic and acidic residues; it reads TRQQHQQGDESQKMRGDYGK. Residues 712 to 751 form a disordered region; it reads TRQQHQQGDESQKMRGDYGKLKALINSRKSRNRRNQLPES.

This sequence belongs to the semaphorin family. As to quaternary structure, interacts with PLXND1. Expressed intensely in the heart, skeletal muscle, colon, small intestine, ovary, testis, and prostate. Faint expression ubiquitously among other organs, including brain.

The protein resides in the secreted. Its function is as follows. Binds to plexin family members and plays an important role in the regulation of developmental processes. Required for normal cardiovascular development during embryogenesis. Functions as attractant for growing axons, and thereby plays an important role in axon growth and axon guidance. The protein is Semaphorin-3C (SEMA3C) of Homo sapiens (Human).